An 853-amino-acid chain; its full sequence is DNA mismatch repair protein MutS (853 aa).

Position 614-621 (glycine 614–serine 621) interacts with ATP.

Belongs to the DNA mismatch repair MutS family.

Functionally, this protein is involved in the repair of mismatches in DNA. It is possible that it carries out the mismatch recognition step. This protein has a weak ATPase activity. The protein is DNA mismatch repair protein MutS of Shigella dysenteriae serotype 1 (strain Sd197).